A 295-amino-acid chain; its full sequence is UDP-N-acetylenolpyruvoylglucosamine reductase (295 aa).

The 164-residue stretch at 26 to 189 (VGGRADILFK…VEAEFKGVNS (164 aa)) folds into the FAD-binding PCMH-type domain. Arg-169 is an active-site residue. Cys-218 acts as the Proton donor in catalysis. Glu-288 is a catalytic residue.

It belongs to the MurB family. FAD serves as cofactor.

The protein localises to the cytoplasm. The enzyme catalyses UDP-N-acetyl-alpha-D-muramate + NADP(+) = UDP-N-acetyl-3-O-(1-carboxyvinyl)-alpha-D-glucosamine + NADPH + H(+). It participates in cell wall biogenesis; peptidoglycan biosynthesis. In terms of biological role, cell wall formation. The sequence is that of UDP-N-acetylenolpyruvoylglucosamine reductase from Wolbachia sp. subsp. Drosophila simulans (strain wRi).